The following is a 383-amino-acid chain: MTPKLKLNNNINWTKRTIDSLFDLKKGEMLEKELITPEGKYEYFNGGVKNSGRTDKFNTFKNTISVIVGGSCGYVRLADKNFFCGQSNCTLNLLDPLELDLKFAYYALKSQQERIEALAFGTTIQNIRISDLKELEIPFTSNKNEQHAIANTLSVFDERLENLASLIEINRKLRDEYAHKLFSLDEAFLSHWKLEALQSQMHEITLGEIFNFKSGKYLKSEERLEEGKFPYYGAGIDNTGFVAEPNTEKDTISIISNGYSLGNIRYHEIPWFNGTGSIALEPMNNEIYVPFFYCALKYLQKDIKERMKSDDSPFLSLKLAGEIKVPYVKSFQLQRKAGKIVFLLDQKLDQYKKELSSLTVIRDTLLKKLFPDMTERTKSIKDY.

The TRD1 stretch occupies residues 1–142 (MTPKLKLNNN…KELEIPFTSN (142 aa)). Positions 143-182 (KNEQHAIANTLSVFDERLENLASLIEINRKLRDEYAHKLF) are conserved region 1. Residues 143-182 (KNEQHAIANTLSVFDERLENLASLIEINRKLRDEYAHKLF) adopt a coiled-coil conformation. Positions 183–330 (SLDEAFLSHW…GEIKVPYVKS (148 aa)) are TRD2. The segment at 331–370 (FQLQRKAGKIVFLLDQKLDQYKKELSSLTVIRDTLLKKLF) is conserved region 2. A coiled-coil region spans residues 331–370 (FQLQRKAGKIVFLLDQKLDQYKKELSSLTVIRDTLLKKLF).

This sequence belongs to the type-I restriction system S methylase family.

Its function is as follows. The specificity (S) subunit of a type I restriction enzyme; this subunit dictates DNA sequence specificity. This bacterium does not encode the associated endonuclease or methylase subunits. In Mycoplasma genitalium (strain ATCC 33530 / DSM 19775 / NCTC 10195 / G37) (Mycoplasmoides genitalium), this protein is Putative type I specificity subunit S.MgeORF438P.